Reading from the N-terminus, the 471-residue chain is Putative multidrug resistance protein MdtD (471 aa).

Residues 1 to 11 (MTDLPDSTRWQ) lie on the Periplasmic side of the membrane. A helical transmembrane segment spans residues 12 to 32 (LWIVAFGFFMQSLDTTIVNTA). Topologically, residues 33-48 (LPSMAQSLGESPLHMH) are cytoplasmic. Residues 49–69 (MVIVSYVLTVAVMLPASGWLA) form a helical membrane-spanning segment. The Periplasmic segment spans residues 70–76 (DKVGVRN). A helical membrane pass occupies residues 77-97 (IFFTAIVLFTLGSLFCALSGT). Topologically, residues 98 to 101 (LNEL) are cytoplasmic. The chain crosses the membrane as a helical span at residues 102–124 (LLARALQGVGGAMMVPVGRLTVM). The Periplasmic portion of the chain corresponds to 125-137 (KIVPREQYMAAMT). Residues 138–158 (FVTLPGQVGPLLGPALGGLLV) form a helical membrane-spanning segment. At 159–164 (EYASWH) the chain is on the cytoplasmic side. A helical membrane pass occupies residues 165-185 (WIFLINIPVGIIGAIATLLLM). Residues 186-196 (PNYTMQTWRFD) are Periplasmic-facing. The chain crosses the membrane as a helical span at residues 197–217 (LSGFLLLAVGMAVLTLALDGS). The Cytoplasmic portion of the chain corresponds to 218-224 (KGTGLSP). Residues 225 to 245 (LAIAGLVAVGVVALVLYLLHA) traverse the membrane as a helical segment. Over 246–262 (RNNNRALFSLKLFRTRT) the chain is Periplasmic. Residues 263–283 (FSLGLAGSFAGRIGSGMLPFM) traverse the membrane as a helical segment. Topologically, residues 284 to 285 (TP) are cytoplasmic. Residues 286 to 306 (VFLQIGLGFSPFHAGLMMIPM) traverse the membrane as a helical segment. At 307–341 (VLGSMGMKRIVVQVVNRFGYRRVLVATTLGLSLVT) the chain is on the periplasmic side. Residues 342-362 (LLFMTTALLGWYYVLPFVLFL) form a helical membrane-spanning segment. At 363–395 (QGMVNSTRFSSMNTLTLKDLPDNLASSGNSLLS) the chain is on the cytoplasmic side. Residues 396 to 416 (MIMQLSMSIGVTIAGLLLGLF) form a helical membrane-spanning segment. The Periplasmic segment spans residues 417-430 (GSQHVSVDSGTTQT). A helical membrane pass occupies residues 431-451 (VFMYTWLSMALIIALPAFIFA). The Cytoplasmic segment spans residues 452-471 (RVPNDTHQNVAISRRKRSAQ).

It belongs to the major facilitator superfamily. TCR/Tet family.

It localises to the cell inner membrane. The protein is Putative multidrug resistance protein MdtD of Shigella boydii serotype 4 (strain Sb227).